Here is a 285-residue protein sequence, read N- to C-terminus: tRNA-cytidine(32) 2-sulfurtransferase (285 aa).

Positions 48–53 match the PP-loop motif motif; sequence SGGKDS. [4Fe-4S] cluster-binding residues include Cys-122, Cys-125, and Cys-213.

It belongs to the TtcA family. Homodimer. Mg(2+) serves as cofactor. Requires [4Fe-4S] cluster as cofactor.

It localises to the cytoplasm. It catalyses the reaction cytidine(32) in tRNA + S-sulfanyl-L-cysteinyl-[cysteine desulfurase] + AH2 + ATP = 2-thiocytidine(32) in tRNA + L-cysteinyl-[cysteine desulfurase] + A + AMP + diphosphate + H(+). The protein operates within tRNA modification. Its function is as follows. Catalyzes the ATP-dependent 2-thiolation of cytidine in position 32 of tRNA, to form 2-thiocytidine (s(2)C32). The sulfur atoms are provided by the cysteine/cysteine desulfurase (IscS) system. The sequence is that of tRNA-cytidine(32) 2-sulfurtransferase from Cytophaga hutchinsonii (strain ATCC 33406 / DSM 1761 / CIP 103989 / NBRC 15051 / NCIMB 9469 / D465).